A 196-amino-acid chain; its full sequence is Small ribosomal subunit protein uS5 (196 aa).

One can recognise an S5 DRBM domain in the interval 17 to 80 (FEEKMLFVNR…AVARKNMITV (64 aa)). Residues 164–196 (GTEVRPSLSSDSPAGRSATTEAGEGVADTGGMQ) form a disordered region. Residues 170-183 (SLSSDSPAGRSATT) show a composition bias toward polar residues.

Belongs to the universal ribosomal protein uS5 family. In terms of assembly, part of the 30S ribosomal subunit. Contacts proteins S4 and S8.

Its function is as follows. With S4 and S12 plays an important role in translational accuracy. Located at the back of the 30S subunit body where it stabilizes the conformation of the head with respect to the body. In Deinococcus radiodurans (strain ATCC 13939 / DSM 20539 / JCM 16871 / CCUG 27074 / LMG 4051 / NBRC 15346 / NCIMB 9279 / VKM B-1422 / R1), this protein is Small ribosomal subunit protein uS5.